The following is a 238-amino-acid chain: Pyridoxine 5'-phosphate synthase (238 aa).

Asparagine 7 is a binding site for 3-amino-2-oxopropyl phosphate. 9–10 is a 1-deoxy-D-xylulose 5-phosphate binding site; that stretch reads DH. Residue arginine 18 coordinates 3-amino-2-oxopropyl phosphate. Residue histidine 43 is the Proton acceptor of the active site. 1-deoxy-D-xylulose 5-phosphate is bound by residues arginine 45 and histidine 50. The active-site Proton acceptor is the glutamate 70. 1-deoxy-D-xylulose 5-phosphate is bound at residue threonine 100. Histidine 191 functions as the Proton donor in the catalytic mechanism. Residues glycine 192 and 213–214 contribute to the 3-amino-2-oxopropyl phosphate site; that span reads GH.

Belongs to the PNP synthase family. As to quaternary structure, homooctamer; tetramer of dimers.

It localises to the cytoplasm. It catalyses the reaction 3-amino-2-oxopropyl phosphate + 1-deoxy-D-xylulose 5-phosphate = pyridoxine 5'-phosphate + phosphate + 2 H2O + H(+). The protein operates within cofactor biosynthesis; pyridoxine 5'-phosphate biosynthesis; pyridoxine 5'-phosphate from D-erythrose 4-phosphate: step 5/5. In terms of biological role, catalyzes the complicated ring closure reaction between the two acyclic compounds 1-deoxy-D-xylulose-5-phosphate (DXP) and 3-amino-2-oxopropyl phosphate (1-amino-acetone-3-phosphate or AAP) to form pyridoxine 5'-phosphate (PNP) and inorganic phosphate. This chain is Pyridoxine 5'-phosphate synthase, found in Thermosynechococcus vestitus (strain NIES-2133 / IAM M-273 / BP-1).